The primary structure comprises 1344 residues: Myb-binding protein 1A (1344 aa).

Residues M1 to H24 form a disordered region. A2 is modified (N-acetylalanine). Positions A2–E580 are interaction with MYB. Low complexity predominate over residues P7 to A19. An N6-acetyllysine mark is found at K69 and K156. Short sequence motifs (nuclear export signal) lie at residues S238–V256 and K261–F279. 2 disordered regions span residues D710–V751 and Q1146–P1344. A compositionally biased stretch (acidic residues) spans S732–R747. The span at P1148–P1159 shows a compositional bias: basic and acidic residues. Residue K1149 forms a Glycyl lysine isopeptide (Lys-Gly) (interchain with G-Cter in SUMO2) linkage. The interval K1152–P1344 is required for nuclear and nucleolar localization. Phosphoserine is present on residues S1160 and S1164. Residues T1168 to L1185 show a composition bias toward basic residues. S1187 bears the Phosphoserine mark. Residues E1188–A1202 are compositionally biased toward polar residues. Residue T1191 is modified to Phosphothreonine. Phosphoserine is present on residues S1219 and S1244. The segment covering N1249 to A1258 has biased composition (polar residues). A Phosphothreonine modification is found at T1251. S1253 bears the Phosphoserine mark. T1256 and T1277 each carry phosphothreonine. Phosphoserine occurs at positions 1280, 1303, and 1318. The segment covering L1317–S1329 has biased composition (low complexity). R1322 is modified (citrulline). Phosphoserine occurs at positions 1323, 1325, and 1329.

This sequence belongs to the MYBBP1A family. Component of the B-WICH complex, at least composed of SMARCA5/SNF2H, BAZ1B/WSTF, SF3B1, DEK, MYO1C, ERCC6, MYBBP1A and DDX21. Binds to and represses JUN and MYB via the leucine zipper regions present in these proteins. Also binds to and represses PPARGC1A: this interaction is abrogated when PPARGC1A is phosphorylated by MAPK1/ERK. Binds to and stimulates transcription by AHR. Binds to KPNA2. Interacts with CLOCK and CRY1. Citrullinated by PADI4. In terms of tissue distribution, ubiquitously expressed.

It is found in the nucleus. It localises to the nucleolus. The protein resides in the cytoplasm. May activate or repress transcription via interactions with sequence specific DNA-binding proteins. Repression may be mediated at least in part by histone deacetylase activity (HDAC activity). Acts as a corepressor and in concert with CRY1, represses the transcription of the core circadian clock component PER2. Preferentially binds to dimethylated histone H3 'Lys-9' (H3K9me2) on the PER2 promoter. Has a role in rRNA biogenesis together with PWP1. This Mus musculus (Mouse) protein is Myb-binding protein 1A (Mybbp1a).